Consider the following 448-residue polypeptide: Homogentisate 1,2-dioxygenase (448 aa).

His303 serves as the catalytic Proton acceptor. His346 and Glu352 together coordinate Fe cation. Residues Tyr361 and His382 each contribute to the homogentisate site. Residue His382 participates in Fe cation binding.

The protein belongs to the homogentisate dioxygenase family. As to quaternary structure, hexamer; dimer of trimers. The cofactor is Fe cation.

The catalysed reaction is homogentisate + O2 = 4-maleylacetoacetate + H(+). It functions in the pathway amino-acid degradation; L-phenylalanine degradation; acetoacetate and fumarate from L-phenylalanine: step 4/6. Involved in the catabolism of homogentisate (2,5-dihydroxyphenylacetate or 2,5-OH-PhAc), a central intermediate in the degradation of phenylalanine and tyrosine. Catalyzes the oxidative ring cleavage of the aromatic ring of homogentisate to yield maleylacetoacetate. This Rhodopseudomonas palustris (strain TIE-1) protein is Homogentisate 1,2-dioxygenase.